The following is a 409-amino-acid chain: Probable aspartate/prephenate aminotransferase (409 aa).

The L-aspartate site is built by Gly39, Trp125, and Asn175. Position 239 is an N6-(pyridoxal phosphate)lysine (Lys239). An L-aspartate-binding site is contributed by Arg375.

The protein belongs to the class-I pyridoxal-phosphate-dependent aminotransferase family. As to quaternary structure, homodimer. Requires pyridoxal 5'-phosphate as cofactor.

It is found in the cytoplasm. The enzyme catalyses L-aspartate + 2-oxoglutarate = oxaloacetate + L-glutamate. It catalyses the reaction L-arogenate + 2-oxoglutarate = prephenate + L-glutamate. In terms of biological role, catalyzes the reversible conversion of aspartate and 2-oxoglutarate to glutamate and oxaloacetate. Can also transaminate prephenate in the presence of glutamate. In Rickettsia felis (strain ATCC VR-1525 / URRWXCal2) (Rickettsia azadi), this protein is Probable aspartate/prephenate aminotransferase (aatA).